The primary structure comprises 244 residues: Proteasome subunit alpha type-5 (244 aa).

It belongs to the peptidase T1A family. As to quaternary structure, the 26S proteasome consists of a 20S proteasome core and two 19S regulatory subunits. The 20S proteasome core is composed of 28 subunits that are arranged in four stacked rings, resulting in a barrel-shaped structure. The two end rings are each formed by seven alpha subunits, and the two central rings are each formed by seven beta subunits. The catalytic chamber with the active sites is on the inside of the barrel.

The protein resides in the cytoplasm. It is found in the nucleus. In terms of biological role, the proteasome is a multicatalytic proteinase complex which is characterized by its ability to cleave peptides with Arg, Phe, Tyr, Leu, and Glu adjacent to the leaving group at neutral or slightly basic pH. The proteasome has an ATP-dependent proteolytic activity. The sequence is that of Proteasome subunit alpha type-5 (Prosalpha5) from Drosophila melanogaster (Fruit fly).